The following is a 265-amino-acid chain: Mycothiol acetyltransferase (265 aa).

N-acetyltransferase domains lie at Met-1–Pro-110 and Val-118–Gly-265. 1D-myo-inositol 2-(L-cysteinylamino)-2-deoxy-alpha-D-glucopyranoside is bound at residue Asp-3. Residue Val-44–Val-46 coordinates acetyl-CoA. 1D-myo-inositol 2-(L-cysteinylamino)-2-deoxy-alpha-D-glucopyranoside contacts are provided by Glu-145, Arg-185, and Glu-198. Residues Leu-202 to Val-204 and His-209 to Lys-215 contribute to the acetyl-CoA site. Tyr-236 contacts 1D-myo-inositol 2-(L-cysteinylamino)-2-deoxy-alpha-D-glucopyranoside.

Belongs to the acetyltransferase family. MshD subfamily. Monomer.

It carries out the reaction 1D-myo-inositol 2-(L-cysteinylamino)-2-deoxy-alpha-D-glucopyranoside + acetyl-CoA = mycothiol + CoA + H(+). In terms of biological role, catalyzes the transfer of acetyl from acetyl-CoA to desacetylmycothiol (Cys-GlcN-Ins) to form mycothiol. In Segniliparus rotundus (strain ATCC BAA-972 / CDC 1076 / CIP 108378 / DSM 44985 / JCM 13578), this protein is Mycothiol acetyltransferase.